The primary structure comprises 225 residues: Pyridoxine/pyridoxamine 5'-phosphate oxidase (225 aa).

Substrate-binding positions include 21–24 and Lys-79; that span reads RKSY. FMN-binding positions include 74–79, 89–90, Arg-95, and Lys-96; these read RVVLIK and YT. Residues Tyr-136, Arg-140, and Ser-144 each contribute to the substrate site. Residues 153–154 and Trp-197 each bind FMN; that span reads QS. Position 203–205 (203–205) interacts with substrate; the sequence is RLH. Residue Arg-207 coordinates FMN.

Belongs to the pyridoxamine 5'-phosphate oxidase family. Homodimer. Requires FMN as cofactor.

The catalysed reaction is pyridoxamine 5'-phosphate + O2 + H2O = pyridoxal 5'-phosphate + H2O2 + NH4(+). It catalyses the reaction pyridoxine 5'-phosphate + O2 = pyridoxal 5'-phosphate + H2O2. Its pathway is cofactor metabolism; pyridoxal 5'-phosphate salvage; pyridoxal 5'-phosphate from pyridoxamine 5'-phosphate: step 1/1. It participates in cofactor metabolism; pyridoxal 5'-phosphate salvage; pyridoxal 5'-phosphate from pyridoxine 5'-phosphate: step 1/1. Its function is as follows. Catalyzes the oxidation of either pyridoxine 5'-phosphate (PNP) or pyridoxamine 5'-phosphate (PMP) into pyridoxal 5'-phosphate (PLP). This is Pyridoxine/pyridoxamine 5'-phosphate oxidase from Paracidovorax citrulli (strain AAC00-1) (Acidovorax citrulli).